A 151-amino-acid chain; its full sequence is MARINYSINADPENTSKAMGSELHISPKKSREVCCKIKGMKASEARKFLEDVIAMKQAVPFKRHSEGAGHRKGPMAGGRYPVSASKEILKVLKNAESNAEYKGLEPANMYIIHAAIQRGRVIHGFMPRARGRASPKDTETVNIEMILSEVR.

The segment covering 1-18 (MARINYSINADPENTSKA) has biased composition (polar residues). The interval 1 to 23 (MARINYSINADPENTSKAMGSEL) is disordered.

This sequence belongs to the universal ribosomal protein uL22 family. As to quaternary structure, part of the 50S ribosomal subunit.

Its function is as follows. This protein binds specifically to 23S rRNA. It makes multiple contacts with different domains of the 23S rRNA in the assembled 50S subunit and ribosome. In terms of biological role, the globular domain of the protein is located near the polypeptide exit tunnel on the outside of the subunit, while an extended beta-hairpin is found that lines the wall of the exit tunnel in the center of the 70S ribosome. The chain is Large ribosomal subunit protein uL22 from Methanosarcina mazei (strain ATCC BAA-159 / DSM 3647 / Goe1 / Go1 / JCM 11833 / OCM 88) (Methanosarcina frisia).